We begin with the raw amino-acid sequence, 336 residues long: Protein RecA (336 aa).

ATP is bound at residue 66 to 73; it reads GNESSGKT.

The protein belongs to the RecA family.

The protein localises to the cytoplasm. Functionally, can catalyze the hydrolysis of ATP in the presence of single-stranded DNA, the ATP-dependent uptake of single-stranded DNA by duplex DNA, and the ATP-dependent hybridization of homologous single-stranded DNAs. It interacts with LexA causing its activation and leading to its autocatalytic cleavage. The chain is Protein RecA from Mycoplasma pneumoniae (strain ATCC 29342 / M129 / Subtype 1) (Mycoplasmoides pneumoniae).